Here is a 151-residue protein sequence, read N- to C-terminus: Transcription elongation factor Spt5 (151 aa).

A KOW domain is found at 98 to 128 (PGQVVEIVAGAFKGMKARVIDVNQSKGQVTV).

Belongs to the archaeal Spt5 family. In terms of assembly, heterodimer composed of Spt4 and Spt5. Interacts with RNA polymerase (RNAP).

In terms of biological role, stimulates transcription elongation. This is Transcription elongation factor Spt5 from Aeropyrum pernix (strain ATCC 700893 / DSM 11879 / JCM 9820 / NBRC 100138 / K1).